Consider the following 382-residue polypeptide: Galactokinase (382 aa).

Substrate is bound at residue E34 to D37. G124 to S130 contacts ATP. Mg(2+) contacts are provided by S130 and E162. Residue D174 is the Proton acceptor of the active site. A substrate-binding site is contributed by Y223.

The protein belongs to the GHMP kinase family. GalK subfamily.

The protein resides in the cytoplasm. It carries out the reaction alpha-D-galactose + ATP = alpha-D-galactose 1-phosphate + ADP + H(+). It participates in carbohydrate metabolism; galactose metabolism. Its function is as follows. Catalyzes the transfer of the gamma-phosphate of ATP to D-galactose to form alpha-D-galactose-1-phosphate (Gal-1-P). The protein is Galactokinase of Salmonella typhi.